The following is a 150-amino-acid chain: Protein Turandot X1/X2 (150 aa).

The N-terminal stretch at 1–22 (MRLYIGSLLICVLLGIVPFATA) is a signal peptide. Residues 127–150 (REEGQSNHANSPTTSPSRIQKMTK) are disordered. Polar residues predominate over residues 132 to 150 (SNHANSPTTSPSRIQKMTK).

The protein belongs to the Turandot family.

It localises to the secreted. In terms of biological role, a humoral factor that may play a role in stress tolerance. The protein is Protein Turandot X1/X2 of Drosophila sechellia (Fruit fly).